Reading from the N-terminus, the 545-residue chain is Chaperonin GroEL 2 (545 aa).

Residues 29–32 (TLGP), 86–90 (DGTTT), glycine 413, 479–481 (NAA), and aspartate 495 each bind ATP.

The protein belongs to the chaperonin (HSP60) family. Forms a cylinder of 14 subunits composed of two heptameric rings stacked back-to-back. Interacts with the co-chaperonin GroES.

The protein resides in the cytoplasm. The enzyme catalyses ATP + H2O + a folded polypeptide = ADP + phosphate + an unfolded polypeptide.. Together with its co-chaperonin GroES, plays an essential role in assisting protein folding. The GroEL-GroES system forms a nano-cage that allows encapsulation of the non-native substrate proteins and provides a physical environment optimized to promote and accelerate protein folding. In Prochlorococcus marinus (strain MIT 9312), this protein is Chaperonin GroEL 2.